A 187-amino-acid chain; its full sequence is Tetratricopeptide repeat protein 36 (187 aa).

TPR repeat units follow at residues 47 to 80 (VKDL…LPQR), 82 to 114 (SAYN…SNGK), and 119 to 152 (CQAL…GSEF).

Belongs to the TTC36 family.

This is Tetratricopeptide repeat protein 36 (ttc36) from Danio rerio (Zebrafish).